Here is a 335-residue protein sequence, read N- to C-terminus: UPF0353 protein MMAR_2288 (335 aa).

2 helical membrane-spanning segments follow: residues Trp18–Leu38 and Ile67–Thr87. In terms of domain architecture, VWFA spans Val98 to Leu294. Residues Met309–Ile329 traverse the membrane as a helical segment.

The protein belongs to the UPF0353 family.

The protein localises to the cell membrane. This Mycobacterium marinum (strain ATCC BAA-535 / M) protein is UPF0353 protein MMAR_2288.